A 273-amino-acid chain; its full sequence is E3 ubiquitin-protein ligase SDIR1 (273 aa).

Residues 1–33 (MSFVFRGSRGDLESGFSGGFLPERRAMRVHGAR) are Cytoplasmic-facing. Residues 34 to 54 (PVNSNSLAFLVTVLLLFMILN) traverse the membrane as a helical segment. Topologically, residues 55–56 (SH) are lumenal. The helical transmembrane segment at 57-77 (QMPPNFLLWLVLGVFLMATTL) threads the bilayer. Residues 78 to 273 (RMYATCQQLQ…EIDDDASDMV (196 aa)) lie on the Cytoplasmic side of the membrane. The RING-type; atypical zinc finger occupies 211-252 (CSVCLEQVTVGEIVRTLPCLHQFHAGCIDPWLRQQGTCPVCK).

Interacts with ATP1/SDIRIP1. As to expression, ubiquitous.

The protein resides in the endoplasmic reticulum membrane. The enzyme catalyses S-ubiquitinyl-[E2 ubiquitin-conjugating enzyme]-L-cysteine + [acceptor protein]-L-lysine = [E2 ubiquitin-conjugating enzyme]-L-cysteine + N(6)-ubiquitinyl-[acceptor protein]-L-lysine.. E3 ubiquitin-protein ligase that acts as a positive regulator of abscisic acid-related stress signal transduction. Interacts with and ubiquitinates ATP1/SDIRIP1 to modulate ATP1/SDIRIP1 stability through the 26S proteasome pathway. Regulates abscisic acid (ABA) and salt stress responses by negatively affecting ATP1/SDIRIP1 stability. The SDIR1-ATP1/SDIRIP1 complex plays an important role in ABA signaling through the ubiquitination pathway. The polypeptide is E3 ubiquitin-protein ligase SDIR1 (Arabidopsis thaliana (Mouse-ear cress)).